The primary structure comprises 128 residues: uncharacterized protein (128 aa).

The region spanning 6-74 (GSKLQGKITG…KDGKIGLSIK (69 aa)) is the S1 motif domain. Residues 72 to 128 (SIKKAKDRPQARPRNDFRPKESFEQKMNKFLKDSEDRLSSLKRNTESKRGGRGARRG) are disordered. Basic and acidic residues predominate over residues 78–120 (DRPQARPRNDFRPKESFEQKMNKFLKDSEDRLSSLKRNTESKR).

The protein belongs to the peptidase U57 family.

This is an uncharacterized protein from Bacillus subtilis (strain 168).